Consider the following 125-residue polypeptide: Probable 4-amino-4-deoxy-L-arabinose-phosphoundecaprenol flippase subunit ArnF (125 aa).

At 1-2 (MG) the chain is on the cytoplasmic side. Residues 3-23 (VMWGLISVAIASLAQLSLGFA) form a helical membrane-spanning segment. Residues 24–33 (MMRLPSIAHP) lie on the Periplasmic side of the membrane. The chain crosses the membrane as a helical span at residues 34–54 (LAFISGLGALNAATLALFAGL). At 55-76 (AGYLVSVFCWHKTLHTLALSKA) the chain is on the cytoplasmic side. Residues 77–97 (YALLSLSYVLVWVASMLLPGL) traverse the membrane as a helical segment. At 98 to 100 (QGA) the chain is on the periplasmic side. Residues 101-121 (FSLKAMLGVLCIMAGVMLIFL) form a helical membrane-spanning segment. Residues 122–125 (PARS) are Cytoplasmic-facing.

This sequence belongs to the ArnF family. Heterodimer of ArnE and ArnF.

The protein resides in the cell inner membrane. Its pathway is bacterial outer membrane biogenesis; lipopolysaccharide biosynthesis. Its function is as follows. Translocates 4-amino-4-deoxy-L-arabinose-phosphoundecaprenol (alpha-L-Ara4N-phosphoundecaprenol) from the cytoplasmic to the periplasmic side of the inner membrane. The polypeptide is Probable 4-amino-4-deoxy-L-arabinose-phosphoundecaprenol flippase subunit ArnF (Salmonella agona (strain SL483)).